The primary structure comprises 446 residues: Glucarate dehydratase-related protein (446 aa).

Substrate contacts are provided by histidine 31, threonine 104, tyrosine 149, and lysine 204. Residue lysine 206 is the Proton acceptor of the active site. 3 residues coordinate Mg(2+): aspartate 234, glutamate 265, and asparagine 288. 234–236 (DPN) is a substrate binding site. Substrate-binding positions include asparagine 288, 338 to 340 (HSN), histidine 367, and arginine 421. Histidine 338 acts as the Proton acceptor in catalysis.

The protein belongs to the mandelate racemase/muconate lactonizing enzyme family. GlucD subfamily. A divalent metal cation is required as a cofactor.

Its function is as follows. Does not seem to have an in-vivo activity on glucarate or idarate. Its real substrate is unknown. This is Glucarate dehydratase-related protein (gudX) from Escherichia coli (strain K12).